A 557-amino-acid chain; its full sequence is Dihydroxy-acid dehydratase (557 aa).

Cys50 contributes to the [2Fe-2S] cluster binding site. Asp82 contacts Mg(2+). Residue Cys123 participates in [2Fe-2S] cluster binding. Mg(2+) is bound by residues Asp124 and Lys125. The residue at position 125 (Lys125) is an N6-carboxylysine. Cys195 contributes to the [2Fe-2S] cluster binding site. Glu447 is a binding site for Mg(2+). Catalysis depends on Ser473, which acts as the Proton acceptor.

This sequence belongs to the IlvD/Edd family. As to quaternary structure, homodimer. It depends on [2Fe-2S] cluster as a cofactor. Mg(2+) serves as cofactor.

It catalyses the reaction (2R)-2,3-dihydroxy-3-methylbutanoate = 3-methyl-2-oxobutanoate + H2O. The catalysed reaction is (2R,3R)-2,3-dihydroxy-3-methylpentanoate = (S)-3-methyl-2-oxopentanoate + H2O. The protein operates within amino-acid biosynthesis; L-isoleucine biosynthesis; L-isoleucine from 2-oxobutanoate: step 3/4. It functions in the pathway amino-acid biosynthesis; L-valine biosynthesis; L-valine from pyruvate: step 3/4. Its function is as follows. Functions in the biosynthesis of branched-chain amino acids. Catalyzes the dehydration of (2R,3R)-2,3-dihydroxy-3-methylpentanoate (2,3-dihydroxy-3-methylvalerate) into 2-oxo-3-methylpentanoate (2-oxo-3-methylvalerate) and of (2R)-2,3-dihydroxy-3-methylbutanoate (2,3-dihydroxyisovalerate) into 2-oxo-3-methylbutanoate (2-oxoisovalerate), the penultimate precursor to L-isoleucine and L-valine, respectively. In Nitrosomonas europaea (strain ATCC 19718 / CIP 103999 / KCTC 2705 / NBRC 14298), this protein is Dihydroxy-acid dehydratase.